A 376-amino-acid polypeptide reads, in one-letter code: Endo-1,4-beta-xylanase A (376 aa).

An N-terminal signal peptide occupies residues 1–18 (MHLASSLFLLATLPFGFA). In terms of domain architecture, GH10 spans 55–355 (QRERAGLEDK…HPAYYGVVEA (301 aa)). The N-linked (GlcNAc...) asparagine glycan is linked to Asn100. Glu170 acts as the Proton donor in catalysis. The Nucleophile role is filled by Glu277. An N-linked (GlcNAc...) asparagine glycan is attached at Asn358.

This sequence belongs to the glycosyl hydrolase 10 (cellulase F) family.

It localises to the secreted. It catalyses the reaction Endohydrolysis of (1-&gt;4)-beta-D-xylosidic linkages in xylans.. The protein operates within glycan degradation; xylan degradation. With respect to regulation, partial inhibition of activity is detected in the presence of Ag(+), Cu2(+) and SDS. Like most fungal xylanases, activity is completely inhibited by Hg(2+) since Hg(2+) could interact with tryptophan residues and oxidize the indole ring. Beta-mercaptoethanol enhances the enzymatic activity by counteracting the oxidation effects of the S-S linkage between cysteine residues. Functionally, endo-1,4-beta-xylanase involved in the hydrolysis of xylan, a major structural heterogeneous polysaccharide found in plant biomass representing the second most abundant polysaccharide in the biosphere, after cellulose. Is most active on birchwood xylan (defined as 100%), moderate on beechwood xylan (96.8%) and soluble wheat arabinoxylan (84.5%), and weak on insoluble wheat arabinoxylan (19.7%). Hydrolyzes substrates into a mixture of xylobiose and xylotriose, but no xylose. No activity was detected in the presence of barley beta-glucan, carboxymethyl cellulose-sodium (CMC-Na), and Avicel. Acts as an alkali-tolerant xylanase, exhibiting 68.8% of the activity at pH 9.0, and even 31.8% at pH 10.0. This chain is Endo-1,4-beta-xylanase A, found in Humicola insolens (Soft-rot fungus).